Consider the following 929-residue polypeptide: Protein translocase subunit SecA (929 aa).

Residues Gln-87, 105-109 (GEGKT), and Asp-512 each bind ATP. Zn(2+) contacts are provided by Cys-914, Cys-916, Cys-925, and His-926.

This sequence belongs to the SecA family. In terms of assembly, monomer and homodimer. Part of the essential Sec protein translocation apparatus which comprises SecA, SecYEG and auxiliary proteins SecDF-YajC and YidC. Zn(2+) serves as cofactor.

It localises to the cell inner membrane. It is found in the cytoplasm. It carries out the reaction ATP + H2O + cellular proteinSide 1 = ADP + phosphate + cellular proteinSide 2.. Its function is as follows. Part of the Sec protein translocase complex. Interacts with the SecYEG preprotein conducting channel. Has a central role in coupling the hydrolysis of ATP to the transfer of proteins into and across the cell membrane, serving both as a receptor for the preprotein-SecB complex and as an ATP-driven molecular motor driving the stepwise translocation of polypeptide chains across the membrane. The sequence is that of Protein translocase subunit SecA from Psychrobacter arcticus (strain DSM 17307 / VKM B-2377 / 273-4).